The primary structure comprises 298 residues: Tyrosine recombinase XerC (298 aa).

The region spanning 2-88 is the Core-binding (CB) domain; that stretch reads TDLHTDVERY…ALRSFFDWLV (87 aa). Positions 109–288 constitute a Tyr recombinase domain; sequence HLPKNIDVDD…DFQHLASVYD (180 aa). Catalysis depends on residues Arg148, Lys172, His240, Arg243, and His266. Tyr275 serves as the catalytic O-(3'-phospho-DNA)-tyrosine intermediate.

It belongs to the 'phage' integrase family. XerC subfamily. In terms of assembly, forms a cyclic heterotetrameric complex composed of two molecules of XerC and two molecules of XerD, in which XerC interacts with XerD via its C-terminal region, XerD interacts with XerC via its C-terminal region and so on.

The protein resides in the cytoplasm. With respect to regulation, ftsK may regulate the catalytic switch between XerC and XerD in the heterotetrameric complex during the two steps of the recombination process. Functionally, site-specific tyrosine recombinase, which acts by catalyzing the cutting and rejoining of the recombining DNA molecules. Binds cooperatively to specific DNA consensus sequences that are separated from XerD binding sites by a short central region, forming the heterotetrameric XerC-XerD complex that recombines DNA substrates. The complex is essential to convert dimers of the bacterial chromosome into monomers to permit their segregation at cell division. It also contributes to the segregational stability of plasmids. In the complex XerC specifically exchanges the top DNA strands. This Escherichia coli (strain 55989 / EAEC) protein is Tyrosine recombinase XerC.